Here is a 1904-residue protein sequence, read N- to C-terminus: Callose synthase 10 (1904 aa).

Residues 100-132 form an HAT 1 repeat; it reads VIKQKLAKRDGASIDRDRDIERLWEFYKLYKRR. 6 helical membrane-spanning segments follow: residues 491 to 511, 532 to 552, 562 to 582, 594 to 614, 661 to 681, and 722 to 742; these read SFIRLWIFMFIMFQSLTIIAF, AIMNFIECLLDVVLMYGAYSM, VIRFLWWGLGSAFVVYYYVKV, FFFHLYILVLGCYAAVRLIFG, YVAFWLVVLASKFTFAYFLQI, and VLAIYLMDIHIWYTLLSAIIG. The stretch at 678-701 is one LRR 1 repeat; the sequence is FLQIKPLVKPTNTIIHLPPFQYSW. 2 LRR repeats span residues 751-774 and 925-948; these read LGEIRTIEMVHKRFESFPEAFAQN and TLNLKKLQLVVSRFTALTGLLIRN. Residues 1074-1107 form an HAT 2 repeat; that stretch reads YSSSELRSENEDGISILFYLQKIFPDEWENFLER. An LRR 4 repeat occupies 1159–1181; the sequence is FLERRGLGVDDASLTNMPRGFES. A run of 9 helical transmembrane segments spans residues 1474-1494, 1529-1549, 1554-1574, 1621-1641, 1644-1664, 1747-1767, 1783-1803, 1811-1831, and 1853-1873; these read FTTVGFYVCTMMTVLTVYVFL, FLVQIGIFTAVPMVMGFILEL, AIFSFITMQFQLCSVFFTFSL, AFEVALLLIIYIAYGYTDGGA, FVLLTISSWFLVISWLFAPYI, LALYGYSWVVLVVIVFLFKLF, FLQGVASITFIALIVVAIAMT, FACVLGFIPTGWALLSLAITW, and AAMGMLIFSPIALLSWFPFIS. Residues 1659 to 1691 form an HAT 3 repeat; the sequence is LFAPYIFNPSGFEWQKTVEDFEDWVSWLMYKGG.

The protein belongs to the glycosyltransferase 48 family.

The protein resides in the cell membrane. The catalysed reaction is [(1-&gt;3)-beta-D-glucosyl](n) + UDP-alpha-D-glucose = [(1-&gt;3)-beta-D-glucosyl](n+1) + UDP + H(+). Involved in sporophytic and gametophytic development. Required for normal plant development and for the proper accumulation of callose at cell plates, cll walls and plasmodesmata. During pollen formation, required for the entry of microspores into mitosis. During plant growth and development, callose is found as a transitory component of the cell plate in dividing cells, is a major component of pollen mother cell walls and pollen tubes, and is found as a structural component of plasmodesmatal canals. Required for proper cell division and tissue patterning throughout plant organs, including stomatal patterning. The sequence is that of Callose synthase 10 (CALS10) from Arabidopsis thaliana (Mouse-ear cress).